Consider the following 456-residue polypeptide: Molybdate transporter 1 (456 aa).

The next 9 helical transmembrane spans lie at 67–87 (LIFTGIYNAITGAVYGVPMPV), 110–130 (IMAAGICTGGILFVLGISGLM), 133–153 (VFNIIPLSVVRGIQLSQGLAF), 177–197 (PWLGLDGLVLALVCVLFIVLV), 225–245 (VIANVPSALLIFLLGVVLAFI), 309–329 (AASVSMTVGLMNMVGCWFGAM), 354–374 (LLGVAKLVLGLVLGGSLVGIL), 377–397 (FPVGVLGALLLFAGVELAMAA), and 417–437 (LGSNAAIGFVAGDLLYVVLWM).

The protein belongs to the SLC26A/SulP transporter (TC 2.A.53) family. In terms of tissue distribution, strongly expressed in roots. Detected in the vascular tissues of hypocotyls, in petioles and vascular tissues of cotyledons and leaves, in mesophyll cells, stamen, sepals and siliques.

It localises to the cell membrane. The protein localises to the endomembrane system. Its subcellular location is the mitochondrion membrane. Not inhibited by sulfate. Its function is as follows. High affinity molybdate transporter. Unable to transport sulfate. The chain is Molybdate transporter 1 (MOT1) from Arabidopsis thaliana (Mouse-ear cress).